A 149-amino-acid polypeptide reads, in one-letter code: MNKGQRHIKIREIIMNSDIETQDELVDRLKEAGFNVTQATVSRDIKEMQLVKVPMANGRYKYSLPSDQRFNPLQKLKRALVDVFIKLDGTGNLLVLRTLPGNAHAIGVLLDNLDWGEIVGTICGDDTCLIICRTPKDAKKVSNQLLSML.

The protein belongs to the ArgR family.

The protein localises to the cytoplasm. It functions in the pathway amino-acid biosynthesis; L-arginine biosynthesis [regulation]. Functionally, regulates arginine biosynthesis genes. This chain is Arginine repressor, found in Geobacillus thermodenitrificans (strain NG80-2).